The chain runs to 211 residues: Orotate phosphoribosyltransferase (211 aa).

Lys26 contacts 5-phospho-alpha-D-ribose 1-diphosphate. 34-35 (FF) provides a ligand contact to orotate. Residues 72–73 (YK), Arg98, Lys99, Lys102, His104, and 123–131 (DDVITAGTA) each bind 5-phospho-alpha-D-ribose 1-diphosphate. Orotate is bound by residues Thr127 and Arg155.

Belongs to the purine/pyrimidine phosphoribosyltransferase family. PyrE subfamily. Homodimer. Mg(2+) serves as cofactor.

It carries out the reaction orotidine 5'-phosphate + diphosphate = orotate + 5-phospho-alpha-D-ribose 1-diphosphate. Its pathway is pyrimidine metabolism; UMP biosynthesis via de novo pathway; UMP from orotate: step 1/2. In terms of biological role, catalyzes the transfer of a ribosyl phosphate group from 5-phosphoribose 1-diphosphate to orotate, leading to the formation of orotidine monophosphate (OMP). In Legionella pneumophila (strain Lens), this protein is Orotate phosphoribosyltransferase.